The primary structure comprises 1106 residues: Carbamoyl phosphate synthase large chain (1106 aa).

The segment at 1 to 402 (MPRRQDLNSV…ALQKAMRSLE (402 aa)) is carboxyphosphate synthetic domain. Arg129, Arg169, Gly175, Gly176, Glu208, Ile210, Glu215, Gly241, Val242, His243, Gln285, and Glu299 together coordinate ATP. An ATP-grasp 1 domain is found at 133–328 (KGVVERCGAE…IAKIATKLSL (196 aa)). 3 residues coordinate Mg(2+): Gln285, Glu299, and Asn301. Residues Gln285, Glu299, and Asn301 each coordinate Mn(2+). The tract at residues 403-550 (QKGSAFSFAR…YHYSSYDRET (148 aa)) is oligomerization domain. Residues 551 to 953 (EVAPHEKPSV…AFAKAQAAAG (403 aa)) are carbamoyl phosphate synthetic domain. The ATP-grasp 2 domain occupies 681–872 (ARVLTEAGLR…MAKAAALIGT (192 aa)). Arg717, Lys756, Leu758, Glu763, Gly788, Ile789, His790, Ser791, Gln831, and Glu843 together coordinate ATP. Residues Gln831, Glu843, and Asn845 each contribute to the Mg(2+) site. 3 residues coordinate Mn(2+): Gln831, Glu843, and Asn845. An MGS-like domain is found at 954–1106 (GPLPTSGSLF…ERAAQEASRD (153 aa)). Residues 954 to 1106 (GPLPTSGSLF…ERAAQEASRD (153 aa)) are allosteric domain.

Belongs to the CarB family. Composed of two chains; the small (or glutamine) chain promotes the hydrolysis of glutamine to ammonia, which is used by the large (or ammonia) chain to synthesize carbamoyl phosphate. Tetramer of heterodimers (alpha,beta)4. Mg(2+) serves as cofactor. Mn(2+) is required as a cofactor.

The enzyme catalyses hydrogencarbonate + L-glutamine + 2 ATP + H2O = carbamoyl phosphate + L-glutamate + 2 ADP + phosphate + 2 H(+). The catalysed reaction is hydrogencarbonate + NH4(+) + 2 ATP = carbamoyl phosphate + 2 ADP + phosphate + 2 H(+). It participates in amino-acid biosynthesis; L-arginine biosynthesis; carbamoyl phosphate from bicarbonate: step 1/1. Its pathway is pyrimidine metabolism; UMP biosynthesis via de novo pathway; (S)-dihydroorotate from bicarbonate: step 1/3. Functionally, large subunit of the glutamine-dependent carbamoyl phosphate synthetase (CPSase). CPSase catalyzes the formation of carbamoyl phosphate from the ammonia moiety of glutamine, carbonate, and phosphate donated by ATP, constituting the first step of 2 biosynthetic pathways, one leading to arginine and/or urea and the other to pyrimidine nucleotides. The large subunit (synthetase) binds the substrates ammonia (free or transferred from glutamine from the small subunit), hydrogencarbonate and ATP and carries out an ATP-coupled ligase reaction, activating hydrogencarbonate by forming carboxy phosphate which reacts with ammonia to form carbamoyl phosphate. In Kocuria rhizophila (strain ATCC 9341 / DSM 348 / NBRC 103217 / DC2201), this protein is Carbamoyl phosphate synthase large chain.